The primary structure comprises 290 residues: Shikimate dehydrogenase (NADP(+)) (290 aa).

Shikimate is bound by residues Ser-18–Ser-20 and Thr-66. Lys-70 acts as the Proton acceptor in catalysis. Shikimate is bound by residues Asn-91 and Asp-106. NADP(+)-binding positions include Gly-130–Ala-134 and Met-230. Tyr-232 serves as a coordination point for shikimate. Gly-253 contacts NADP(+).

It belongs to the shikimate dehydrogenase family. As to quaternary structure, homodimer.

It carries out the reaction shikimate + NADP(+) = 3-dehydroshikimate + NADPH + H(+). Its pathway is metabolic intermediate biosynthesis; chorismate biosynthesis; chorismate from D-erythrose 4-phosphate and phosphoenolpyruvate: step 4/7. Its function is as follows. Involved in the biosynthesis of the chorismate, which leads to the biosynthesis of aromatic amino acids. Catalyzes the reversible NADPH linked reduction of 3-dehydroshikimate (DHSA) to yield shikimate (SA). This chain is Shikimate dehydrogenase (NADP(+)), found in Prosthecochloris aestuarii (strain DSM 271 / SK 413).